We begin with the raw amino-acid sequence, 248 residues long: Triosephosphate isomerase (248 aa).

A Phosphothreonine modification is found at threonine 4. Substrate-binding residues include asparagine 10 and lysine 12. Serine 71 carries the phosphoserine modification. Residue histidine 95 is the Electrophile of the active site. Catalysis depends on glutamate 165, which acts as the Proton acceptor. A Phosphoserine modification is found at serine 215. Residue lysine 223 forms a Glycyl lysine isopeptide (Lys-Gly) (interchain with G-Cter in ubiquitin) linkage.

It belongs to the triosephosphate isomerase family. As to quaternary structure, homodimer.

It catalyses the reaction D-glyceraldehyde 3-phosphate = dihydroxyacetone phosphate. It participates in carbohydrate biosynthesis; gluconeogenesis. Its pathway is carbohydrate degradation; glycolysis; D-glyceraldehyde 3-phosphate from glycerone phosphate: step 1/1. The protein is Triosephosphate isomerase (TPI1) of Saccharomyces cerevisiae (strain ATCC 204508 / S288c) (Baker's yeast).